The primary structure comprises 104 residues: Large ribosomal subunit protein uL23 (104 aa).

The protein belongs to the universal ribosomal protein uL23 family. Part of the 50S ribosomal subunit. Contacts protein L29, and trigger factor when it is bound to the ribosome.

Its function is as follows. One of the early assembly proteins it binds 23S rRNA. One of the proteins that surrounds the polypeptide exit tunnel on the outside of the ribosome. Forms the main docking site for trigger factor binding to the ribosome. The protein is Large ribosomal subunit protein uL23 of Neisseria meningitidis serogroup B (strain ATCC BAA-335 / MC58).